Reading from the N-terminus, the 129-residue chain is Large ribosomal subunit protein bL12 (129 aa).

It belongs to the bacterial ribosomal protein bL12 family. As to quaternary structure, homodimer. Part of the ribosomal stalk of the 50S ribosomal subunit. Forms a multimeric L10(L12)X complex, where L10 forms an elongated spine to which 2 to 4 L12 dimers bind in a sequential fashion. Binds GTP-bound translation factors.

Its function is as follows. Forms part of the ribosomal stalk which helps the ribosome interact with GTP-bound translation factors. Is thus essential for accurate translation. The protein is Large ribosomal subunit protein bL12 of Synechococcus sp. (strain CC9605).